An 84-amino-acid polypeptide reads, in one-letter code: Acyl carrier protein MbtL (84 aa).

The 76-residue stretch at 6-81 (STVSTTLLSI…ELEAAIAAKY (76 aa)) folds into the Carrier domain. Residue Ser41 is modified to O-(pantetheine 4'-phosphoryl)serine.

In terms of processing, 4'-phosphopantetheine is transferred from CoA to a specific serine of apo-ACP, leading to the activated holo-ACP form.

The protein localises to the cytoplasm. The protein operates within siderophore biosynthesis; mycobactin biosynthesis. In terms of biological role, acyl carrier protein involved in the formation of acyl-S-ACP intermediates within the mycobactin biosynthesis process. The aliphatic chains carried by ACP are subsequently transferred on to the mycobactin core by MbtK. In Mycobacterium bovis (strain ATCC BAA-935 / AF2122/97), this protein is Acyl carrier protein MbtL (mbtL).